The following is a 536-amino-acid chain: MGNPTLMRWPVTRILVLGLVVTVLYKAMAIYSSRRAPVQVCFTSPSSAFKIKHIFHNAADGRTHKRLDIDDEFLSIYNSARSQMAHIEDMDLFTVSPFEQELVIRHTEGQTVRLADRSPDFVESYLDYALENGPASRMIEFDWQQESLLIPNMSDKETIVSLALMSSDAYVGLPTDADWNDVGDKYNESERFGWENGGVRGHVFTDPEETIVIISIKGTSAAGLNTGGDGQTVEQDKTNDNLLFSCCCARVSSLWKTVCDCYEESYTCNQNCLEQELRRPDRYYKAVLEIYRNVTHMYPESEIWVTGHSLGGSLSSLLGRTFGLPAVSFEAVGELLATRRLHLPMPPGLPEEMENIWHVGNTADPIFMGVCNGASSTCSLAGYALETQCHSGKKCVYDVVNDLGWHVNLLNHRIRTIISDVLMVYNDTAECVKPPPCYDCYNWRFVDHSGDRYRTTASSPSPIPSDPPGRRCLKRTWYGRCYEWADDPSAVKTTFATSTIYRKTSDISTSTHTGGNTTCIRRSWLGYCLEYGPELR.

At 1-8 (MGNPTLMR) the chain is on the cytoplasmic side. The helical; Signal-anchor for type II membrane protein transmembrane segment at 9 to 31 (WPVTRILVLGLVVTVLYKAMAIY) threads the bilayer. The Lumenal portion of the chain corresponds to 32 to 536 (SSRRAPVQVC…YCLEYGPELR (505 aa)). Asn-152, Asn-187, and Asn-293 each carry an N-linked (GlcNAc...) asparagine glycan. Ser-309 (charge relay system) is an active-site residue. Residues Asn-426 and Asn-516 are each glycosylated (N-linked (GlcNAc...) asparagine).

It belongs to the AB hydrolase superfamily. Lipase family. In terms of assembly, binds to both phosphatidylinositol (PI) and phosphatidylinositol 3,5-bisphosphate (PIP2).

Its subcellular location is the endosome. It is found in the multivesicular body membrane. The protein resides in the prevacuolar compartment membrane. It carries out the reaction a triacylglycerol + H2O = a diacylglycerol + a fatty acid + H(+). Functionally, lipase which is essential for lysis of subvacuolar cytoplasm to vacuole targeted bodies and intravacuolar autophagic bodies. Involved in the lysis of intravacuolar multivesicular body (MVB) vesicles. The intravacuolar membrane disintegration by ATG15 is critical to life span extension. This is Putative lipase ATG15 (ATG15) from Pichia angusta (Yeast).